We begin with the raw amino-acid sequence, 200 residues long: NADH-quinone oxidoreductase subunit C (200 aa).

The protein belongs to the complex I 30 kDa subunit family. NDH-1 is composed of 14 different subunits. Subunits NuoB, C, D, E, F, and G constitute the peripheral sector of the complex.

It is found in the cell inner membrane. The enzyme catalyses a quinone + NADH + 5 H(+)(in) = a quinol + NAD(+) + 4 H(+)(out). Functionally, NDH-1 shuttles electrons from NADH, via FMN and iron-sulfur (Fe-S) centers, to quinones in the respiratory chain. The immediate electron acceptor for the enzyme in this species is believed to be ubiquinone. Couples the redox reaction to proton translocation (for every two electrons transferred, four hydrogen ions are translocated across the cytoplasmic membrane), and thus conserves the redox energy in a proton gradient. This Burkholderia ambifaria (strain ATCC BAA-244 / DSM 16087 / CCUG 44356 / LMG 19182 / AMMD) (Burkholderia cepacia (strain AMMD)) protein is NADH-quinone oxidoreductase subunit C.